A 154-amino-acid chain; its full sequence is Lipoprotein signal peptidase (154 aa).

3 helical membrane-spanning segments follow: residues 4-24, 62-82, and 84-104; these read IIIP…KLWI, LFTL…MKHI, and GSYW…GNFI. Catalysis depends on residues D114 and D130. Residues 125–145 traverse the membrane as a helical segment; that stretch reads IFNVADSYLTIGIICLMIALW.

Belongs to the peptidase A8 family.

It is found in the cell membrane. It catalyses the reaction Release of signal peptides from bacterial membrane prolipoproteins. Hydrolyzes -Xaa-Yaa-Zaa-|-(S,diacylglyceryl)Cys-, in which Xaa is hydrophobic (preferably Leu), and Yaa (Ala or Ser) and Zaa (Gly or Ala) have small, neutral side chains.. It functions in the pathway protein modification; lipoprotein biosynthesis (signal peptide cleavage). This protein specifically catalyzes the removal of signal peptides from prolipoproteins. The protein is Lipoprotein signal peptidase of Streptococcus agalactiae serotype Ia (strain ATCC 27591 / A909 / CDC SS700).